Reading from the N-terminus, the 200-residue chain is Small ribosomal subunit protein uS4 (200 aa).

The region spanning 92–155 (SRLDAVVYQL…QKLNIIAESV (64 aa)) is the S4 RNA-binding domain.

Belongs to the universal ribosomal protein uS4 family. As to quaternary structure, part of the 30S ribosomal subunit. Contacts protein S5. The interaction surface between S4 and S5 is involved in control of translational fidelity.

In terms of biological role, one of the primary rRNA binding proteins, it binds directly to 16S rRNA where it nucleates assembly of the body of the 30S subunit. Its function is as follows. With S5 and S12 plays an important role in translational accuracy. The chain is Small ribosomal subunit protein uS4 from Macrococcus caseolyticus (strain JCSC5402) (Macrococcoides caseolyticum).